We begin with the raw amino-acid sequence, 640 residues long: Protein cereblon (640 aa).

Acidic residues predominate over residues 1–11 (MDDEETAEIDE). Disordered regions lie at residues 1 to 25 (MDDE…ELGP) and 92 to 159 (REDP…EAVP). Residues 113–137 (QPAQQEEQASLPYDSPSRASISSRH) are compositionally biased toward low complexity. The Lon N-terminal domain occupies 278–506 (RMLIFMHQHI…IIDTTLKQES (229 aa)). In terms of domain architecture, CULT spans 505-614 (ESLFYCRYCN…LAGSSVRIGK (110 aa)). Residues Cys-510, Cys-513, Cys-579, and Cys-582 each contribute to the Zn(2+) site.

The protein belongs to the CRBN family. As to quaternary structure, likely a component of a DCX (DDB1-CUL4-X-box) protein ligase complex. May interact with pic/DDB1. Ubiquitinated.

It is found in the nucleus. It participates in protein modification; protein ubiquitination. Substrate recognition component of a DCX (DDB1-CUL4-X-box) E3 protein ligase complex that mediates the ubiquitination and subsequent proteasomal degradation of target proteins. Has an essential role in mediating growth by negatively regulating insulin signaling. It also has a role in maintaining presynaptic function in the neuromuscular junction synapses of third-instar larvae. In Drosophila virilis (Fruit fly), this protein is Protein cereblon.